The sequence spans 334 residues: MIERLRGALASASFPVMALLLLSAIVVYPLWTMLFLGAVFAYIVRPVALRINRRIPYLSVSIILAMIVVIMPLVGILVFTVDSIINSAPSLLSLAGSIHVPGAGNLQPSAENTLANLRTVLRDILSGSLNYVVAILQSVPMISLQLFVFLSSTFYFARDGKRLVGYIRTLIPEETRPFMERMASETERVLLSIFYGHFLTALAIGLMAAVGFHLLGYPYAILLGIMTGLFQLIPVIGPWAAYTPLSIYDFVTGNILRGVLVLIFGLFLSTIDIYLRPKLSGKYADIHPMIFLVGFLGGPVVWGVAGFIVGPLVLGLAYAALEAYRMESGGEEVQ.

8 helical membrane-spanning segments follow: residues A24–V44, V60–T80, I84–G104, Y131–S151, V189–A209, A220–A240, I255–L275, and M289–V309.

It belongs to the autoinducer-2 exporter (AI-2E) (TC 2.A.86) family.

It localises to the cell membrane. The sequence is that of Putative transport protein MTH_1211 from Methanothermobacter thermautotrophicus (strain ATCC 29096 / DSM 1053 / JCM 10044 / NBRC 100330 / Delta H) (Methanobacterium thermoautotrophicum).